Here is a 725-residue protein sequence, read N- to C-terminus: Antigen peptide transporter 1 (725 aa).

Residues 1–8 (MAAHAWPT) are Cytoplasmic-facing. Residues 9–29 (AALLLLLVDWLLLRPVLPGIF) form a helical membrane-spanning segment. Topologically, residues 30–38 (SLLVPEVPL) are lumenal. The chain crosses the membrane as a helical span at residues 39 to 60 (LRVWAVGLSRWAILGLGVRGVL). Residues 61–67 (GVTAGAR) are Cytoplasmic-facing. A helical membrane pass occupies residues 68 to 88 (GWLAALQPLVAALGLALPGLA). Over 89-110 (SFRKLSAWGALREGDNAGLLHW) the chain is Lumenal. A helical membrane pass occupies residues 111–131 (NSRLDAFVLSYVAALPAAALW). The Cytoplasmic portion of the chain corresponds to 132-163 (HKLGGFWAPSGHKGAGDMLCRMLGFLDSKKGR). Residues 164-184 (LHLVLVLLILSCLGEMAIPFF) form a helical membrane-spanning segment. An ABC transmembrane type-1 domain is found at 164–447 (LHLVLVLLIL…LLSIYPSMQK (284 aa)). Topologically, residues 185–204 (TGRITDWILQDKTAPSFARN) are lumenal. The chain crosses the membrane as a helical span at residues 205–225 (MWLMCILTIASTVLEFAGDGI). Residues 226–275 (YNITMGHMHSRVHGEVFRAVLHQETGFFLKNPTGSITSRVTEDTSNVCES) are Cytoplasmic-facing. A helical membrane pass occupies residues 276 to 296 (ISDKLNLFLWYLGRGLCLLAF). The Lumenal segment spans residues 297 to 305 (MIWGSFYLT). Residues 306–326 (VVTLLSLPLLFLLPRRLGKVY) form a helical membrane-spanning segment. Residues 327 to 395 (QSLAVKVQES…VTEVWTMSVS (69 aa)) are Cytoplasmic-facing. A part of the peptide-binding site region spans residues 352–397 (PTVRSFANEEGEAQKFRQKLEEMKPLNKKEALAYVTEVWTMSVSGM). A helical transmembrane segment spans residues 396–416 (GMLLKVGILYLGGQLVVRGAV). The Lumenal segment spans residues 417-420 (SSGN). The helical transmembrane segment at 421–441 (LVSFVLYQLQFTRAVEVLLSI) threads the bilayer. The segment at 430-464 (QFTRAVEVLLSIYPSMQKSVGASEKIFEYLDRTPC) is part of the peptide-binding site. Residues 442-725 (YPSMQKSVGA…MVEALAAPSD (284 aa)) are Cytoplasmic-facing. The ABC transporter domain maps to 480–719 (VKFQDVSFAY…GGCYRSMVEA (240 aa)). Residues 515–523 (GPNGSGKST), 618–624 (NQLSGGQ), and Gln678 each bind ATP. Position 522 (Ser522) interacts with Mg(2+).

Belongs to the ABC transporter superfamily. ABCB family. MHC peptide exporter (TC 3.A.1.209) subfamily. Heterodimer of TAP1 and TAP2 (TAP1-TAP2). A component of the peptide loading complex (PLC), interacts via TAPBP with MHCI heterodimer; this interaction mediates peptide-MHCI assembly. Interacts with PSMB5 and PSMB8. It depends on Mg(2+) as a cofactor.

The protein localises to the endoplasmic reticulum membrane. The enzyme catalyses a peptide antigen(in) + ATP + H2O = a peptide antigen(out) + ADP + phosphate + H(+). In terms of biological role, ABC transporter associated with antigen processing. In complex with TAP2 mediates unidirectional translocation of peptide antigens from cytosol to endoplasmic reticulum (ER) for loading onto MHC class I (MHCI) molecules. Uses the chemical energy of ATP to export peptides against the concentration gradient. During the transport cycle alternates between 'inward-facing' state with peptide binding site facing the cytosol to 'outward-facing' state with peptide binding site facing the ER lumen. Peptide antigen binding to ATP-loaded TAP1-TAP2 induces a switch to hydrolysis-competent 'outward-facing' conformation ready for peptide loading onto nascent MHCI molecules. Subsequently ATP hydrolysis resets the transporter to the 'inward facing' state for a new cycle. As a component of the peptide loading complex (PLC), acts as a molecular scaffold essential for peptide-MHCI assembly and antigen presentation. In Rattus norvegicus (Rat), this protein is Antigen peptide transporter 1 (Tap1).